The chain runs to 199 residues: Superoxide dismutase [Mn/Fe] 1 (199 aa).

Fe(3+) is bound by residues H27, H81, D161, and H165. Residues H27, H81, D161, and H165 each contribute to the Mn(2+) site.

Belongs to the iron/manganese superoxide dismutase family. Homodimer. Can also form a heterodimer with SodM. The cofactor is Mn(2+). Fe(3+) serves as cofactor.

The catalysed reaction is 2 superoxide + 2 H(+) = H2O2 + O2. Destroys superoxide anion radicals which are normally produced within the cells and which are toxic to biological systems. Catalyzes the dismutation of superoxide anion radicals into O2 and H2O2 by successive reduction and oxidation of the transition metal ion at the active site. The chain is Superoxide dismutase [Mn/Fe] 1 (sodA) from Staphylococcus aureus (strain USA300).